Here is a 147-residue protein sequence, read N- to C-terminus: Large ribosomal subunit protein uL13 (147 aa).

The protein belongs to the universal ribosomal protein uL13 family. In terms of assembly, part of the 50S ribosomal subunit.

Functionally, this protein is one of the early assembly proteins of the 50S ribosomal subunit, although it is not seen to bind rRNA by itself. It is important during the early stages of 50S assembly. The polypeptide is Large ribosomal subunit protein uL13 (Mycolicibacterium smegmatis (strain ATCC 700084 / mc(2)155) (Mycobacterium smegmatis)).